The following is a 131-amino-acid chain: MRHYEIVFMVHPDQSEQVPCMIERYSAAITGAEGKIHRLEDWGRRQLAYPINKLHKAHYVLMNVEAPQEVIDELETTFRFNDAVIRSMVMRTKHAVTEASPMVKAKDERRERRDDFANETADDAEAGDSEE.

The disordered stretch occupies residues E98–E131. Basic and acidic residues predominate over residues K104 to F116. Positions T120 to E131 are enriched in acidic residues.

It belongs to the bacterial ribosomal protein bS6 family.

Binds together with bS18 to 16S ribosomal RNA. In Salmonella dublin (strain CT_02021853), this protein is Small ribosomal subunit protein bS6.